A 638-amino-acid chain; its full sequence is Cell division control protein 45 homolog (638 aa).

The disordered stretch occupies residues 151 to 204 (ELSDEENSDSSNEREEEVEDDNRSVESYSSSDYQARSRRRFSEETTQRRAEIKE). Over residues 153–170 (SDEENSDSSNEREEEVED) the composition is skewed to acidic residues. The span at 190-204 (RFSEETTQRRAEIKE) shows a compositional bias: basic and acidic residues.

It belongs to the CDC45 family. As to quaternary structure, interacts with sld3.

The protein localises to the nucleus. Required for initiation of chromosomal DNA replication. May have a role in regulating the MCM proteins nda1 and nda4. The polypeptide is Cell division control protein 45 homolog (sna41) (Schizosaccharomyces pombe (strain 972 / ATCC 24843) (Fission yeast)).